The chain runs to 598 residues: MRIDQSVIDEIKNKTDILDLVSEYVKLEKRGRNYIGLCPFHDEKTPSFTVSEDKQICHCFGCKKGGNVFQFTQEIKDVSFVEAVKDLGERVNIQVDIGQNQTNSSTKIASDELKMIEMHELIKDYYHYALMKTVEGEEALNYLHERGFTDDLIKEREIGYAPDNSHFCHDFLEKKGYDIELAFEAGLLSRNEENFTYFDRFRNRIMFPLKNGQGRIVGYSGRTYTDQEPKYLNSPETPIFQKRRILYNLNKARKFIRKQDEIILLEGFMDVIKSDYAGLKQVVASMGTQLSQEHITFLQKLTQNVTLMFDGDYAGKEATLKTGQALLNQGLNVYVVQLPSGMDPDDYIRKYDNEQFLKFVQQDKQSFVLFKVKMYQNEINHNDLAYEKHFKETVRDLSLVNSGIIRNKLIQNIADIFKVNPETIQYELDATYQHQMSSNTYPTFQDEPSKQQLILGRLTKNEKAERALIKHLTKDKDTFLNYYQKIVPEDFTNSYLKRIFSYLYDYYSKNDYYTISDMMQYIESNELREVLIELDQYHLNDEPYENEIEDYIQIIKNNNNEDSLESLNYKLREASRIGDSELQKYYLQLIVNKNKNRM.

The CHC2-type zinc-finger motif lies at 38–62; the sequence is CPFHDEKTPSFTVSEDKQICHCFGC. The 82-residue stretch at 260–341 folds into the Toprim domain; sequence DEIILLEGFM…NVYVVQLPSG (82 aa). 3 residues coordinate Mg(2+): Glu266, Asp310, and Asp312.

This sequence belongs to the DnaG primase family. In terms of assembly, monomer. Interacts with DnaB. Zn(2+) is required as a cofactor. Mg(2+) serves as cofactor.

The catalysed reaction is ssDNA + n NTP = ssDNA/pppN(pN)n-1 hybrid + (n-1) diphosphate.. RNA polymerase that catalyzes the synthesis of short RNA molecules used as primers for DNA polymerase during DNA replication. This chain is DNA primase, found in Staphylococcus epidermidis (strain ATCC 12228 / FDA PCI 1200).